The following is a 190-amino-acid chain: ATP synthase subunit b (190 aa).

Residues 4–24 (ILAPVLSLVLIAGVASPALAA) form a helical membrane-spanning segment.

It belongs to the ATPase B chain family. In terms of assembly, F-type ATPases have 2 components, F(1) - the catalytic core - and F(0) - the membrane proton channel. F(1) has five subunits: alpha(3), beta(3), gamma(1), delta(1), epsilon(1). F(0) has three main subunits: a(1), b(2) and c(10-14). The alpha and beta chains form an alternating ring which encloses part of the gamma chain. F(1) is attached to F(0) by a central stalk formed by the gamma and epsilon chains, while a peripheral stalk is formed by the delta and b chains.

It is found in the cell inner membrane. Functionally, f(1)F(0) ATP synthase produces ATP from ADP in the presence of a proton or sodium gradient. F-type ATPases consist of two structural domains, F(1) containing the extramembraneous catalytic core and F(0) containing the membrane proton channel, linked together by a central stalk and a peripheral stalk. During catalysis, ATP synthesis in the catalytic domain of F(1) is coupled via a rotary mechanism of the central stalk subunits to proton translocation. In terms of biological role, component of the F(0) channel, it forms part of the peripheral stalk, linking F(1) to F(0). The protein is ATP synthase subunit b of Ruegeria pomeroyi (strain ATCC 700808 / DSM 15171 / DSS-3) (Silicibacter pomeroyi).